The chain runs to 614 residues: Dihydroxy-acid dehydratase (614 aa).

Asp-81 serves as a coordination point for Mg(2+). Residue Cys-122 coordinates [2Fe-2S] cluster. The Mg(2+) site is built by Asp-123 and Lys-124. Lys-124 bears the N6-carboxylysine mark. Cys-193 provides a ligand contact to [2Fe-2S] cluster. Glu-489 lines the Mg(2+) pocket. The active-site Proton acceptor is the Ser-515.

This sequence belongs to the IlvD/Edd family. In terms of assembly, homodimer. It depends on [2Fe-2S] cluster as a cofactor. Mg(2+) is required as a cofactor.

The enzyme catalyses (2R)-2,3-dihydroxy-3-methylbutanoate = 3-methyl-2-oxobutanoate + H2O. It catalyses the reaction (2R,3R)-2,3-dihydroxy-3-methylpentanoate = (S)-3-methyl-2-oxopentanoate + H2O. The protein operates within amino-acid biosynthesis; L-isoleucine biosynthesis; L-isoleucine from 2-oxobutanoate: step 3/4. It participates in amino-acid biosynthesis; L-valine biosynthesis; L-valine from pyruvate: step 3/4. Its function is as follows. Functions in the biosynthesis of branched-chain amino acids. Catalyzes the dehydration of (2R,3R)-2,3-dihydroxy-3-methylpentanoate (2,3-dihydroxy-3-methylvalerate) into 2-oxo-3-methylpentanoate (2-oxo-3-methylvalerate) and of (2R)-2,3-dihydroxy-3-methylbutanoate (2,3-dihydroxyisovalerate) into 2-oxo-3-methylbutanoate (2-oxoisovalerate), the penultimate precursor to L-isoleucine and L-valine, respectively. In Hahella chejuensis (strain KCTC 2396), this protein is Dihydroxy-acid dehydratase.